The primary structure comprises 221 residues: Retinitis pigmentosa 9 protein (221 aa).

Composition is skewed to basic and acidic residues over residues 1 to 10 (MSSRPGREDV), 17 to 29 (RPREPPEQELQRR), and 60 to 69 (IKEDETKPED). The disordered stretch occupies residues 1–76 (MSSRPGREDV…PEDCIPDVPG (76 aa)). The interval 1-155 (MSSRPGREDV…RDNKRHEKDV (155 aa)) is PIM1-binding. A CCHC-type zinc finger spans residues 104-122 (QCWRCKRYGHRTGDKECPF). A Glycyl lysine isopeptide (Lys-Gly) (interchain with G-Cter in SUMO2) cross-link involves residue Lys-129. Residues 147-156 (DNKRHEKDVR) show a composition bias toward basic and acidic residues. A disordered region spans residues 147-221 (DNKRHEKDVR…SKSNEGSDSE (75 aa)). The span at 184–212 (KHKKKKKKEKHKKRKKEKKKKKKRKHKSS) shows a compositional bias: basic residues. Phosphoserine; by PIM1 is present on residues Ser-212 and Ser-214.

In terms of assembly, binds to PIM1. Binds to ZNHIT4. In terms of tissue distribution, appears to be expressed in a wide range of tissues.

Its subcellular location is the nucleus. Is thought to be a target protein for the PIM1 kinase. May play some roles in B-cell proliferation in association with PIM1. The protein is Retinitis pigmentosa 9 protein (RP9) of Homo sapiens (Human).